The chain runs to 267 residues: 4-hydroxy-tetrahydrodipicolinate reductase (267 aa).

10–15 (GAGGKM) is an NAD(+) binding site. Position 38 (Arg38) interacts with NADP(+). Residues 100-102 (GTT) and 126-129 (APNF) each bind NAD(+). His156 acts as the Proton donor/acceptor in catalysis. His157 contacts (S)-2,3,4,5-tetrahydrodipicolinate. The active-site Proton donor is the Lys160. A (S)-2,3,4,5-tetrahydrodipicolinate-binding site is contributed by 166–167 (GT).

This sequence belongs to the DapB family.

The protein resides in the cytoplasm. The enzyme catalyses (S)-2,3,4,5-tetrahydrodipicolinate + NAD(+) + H2O = (2S,4S)-4-hydroxy-2,3,4,5-tetrahydrodipicolinate + NADH + H(+). It catalyses the reaction (S)-2,3,4,5-tetrahydrodipicolinate + NADP(+) + H2O = (2S,4S)-4-hydroxy-2,3,4,5-tetrahydrodipicolinate + NADPH + H(+). It participates in amino-acid biosynthesis; L-lysine biosynthesis via DAP pathway; (S)-tetrahydrodipicolinate from L-aspartate: step 4/4. Catalyzes the conversion of 4-hydroxy-tetrahydrodipicolinate (HTPA) to tetrahydrodipicolinate. The protein is 4-hydroxy-tetrahydrodipicolinate reductase of Desulfitobacterium hafniense (strain DSM 10664 / DCB-2).